An 891-amino-acid chain; its full sequence is Dynein axonemal intermediate chain 3 (891 aa).

Residues 1-16 (MAPKQKKKSSRRKKSP) show a composition bias toward basic residues. A disordered region spans residues 1 to 27 (MAPKQKKKSSRRKKSPKPILAASEDME). WD repeat units lie at residues 395–435 (ESPD…DRIE), 477–533 (GHKR…PLTP), 670–709 (IHDGIVHTIQRSPFYDDIILTVGGWNVAIWKESVMTGPLL), and 713–753 (CAPK…HEPA). Residues 817-861 (HLEYVEQRKKIREQEKKEMEQEMAKKKVKIYQKSKEQMEAELKMD) are a coiled coil.

Interacts with ACTR2; this interaction reduces binding of the Arp2/3 complex to the VCA domain of nucleation promoting factors. Part of the multisubunit axonemal dynein complex formed at least of two heavy chains and a number of intermediate and light chains. Found in a associated with the catalytic heavy chain DNAH2, the intermediate chain DNAI4, and the light chain DYNLT1.

The protein localises to the cytoplasm. In terms of biological role, acts as a negative regulator of cell migration, invasion, and metastasis downstream of p53/TP53, through inhibition of Arp2/3 complex-mediated actin polymerization. Via its association with the multisubunit axonemal dynein complex, is potentially involved in the regulation of cilia function. May play a role in osteogenesis of dental tissue-derived mesenchymal stem cells. The sequence is that of Dynein axonemal intermediate chain 3 (DNAI3) from Macaca fascicularis (Crab-eating macaque).